A 75-amino-acid polypeptide reads, in one-letter code: Putative sulfur carrier protein YrkI (75 aa).

Cys14 functions as the Cysteine persulfide intermediate in the catalytic mechanism.

This sequence belongs to the sulfur carrier protein TusA family.

The polypeptide is Putative sulfur carrier protein YrkI (yrkI) (Bacillus subtilis (strain 168)).